Consider the following 142-residue polypeptide: Small ribosomal subunit protein uS9 (142 aa).

It belongs to the universal ribosomal protein uS9 family.

The sequence is that of Small ribosomal subunit protein uS9 (RPS16) from Debaryomyces hansenii (strain ATCC 36239 / CBS 767 / BCRC 21394 / JCM 1990 / NBRC 0083 / IGC 2968) (Yeast).